The primary structure comprises 247 residues: Syntaxin-like protein fsv1 (247 aa).

A coiled-coil region spans residues 27–94; that stretch reads NPDEEIESSL…FEKQRRASSI (68 aa). The interval 88–130 is disordered; that stretch reads QRRASSIPADGTSAFSANPQVASTNNKLTPLPSLQKTTSSSEG. Residues 100–130 show a composition bias toward polar residues; the sequence is SAFSANPQVASTNNKLTPLPSLQKTTSSSEG. The region spanning 159–221 is the t-SNARE coiled-coil homology domain; that stretch reads QQMLNEQEES…DHAKNRLNKV (63 aa).

It localises to the golgi apparatus membrane. It is found in the prevacuolar compartment membrane. In terms of biological role, involved in vesicle-mediated protein transport between the Golgi and the vacuole. This Schizosaccharomyces pombe (strain 972 / ATCC 24843) (Fission yeast) protein is Syntaxin-like protein fsv1 (fsv1).